The sequence spans 525 residues: Glutamate--cysteine ligase (525 aa).

Belongs to the glutamate--cysteine ligase type 1 family. Type 1 subfamily.

The catalysed reaction is L-cysteine + L-glutamate + ATP = gamma-L-glutamyl-L-cysteine + ADP + phosphate + H(+). It functions in the pathway sulfur metabolism; glutathione biosynthesis; glutathione from L-cysteine and L-glutamate: step 1/2. This Pseudomonas putida (strain ATCC 47054 / DSM 6125 / CFBP 8728 / NCIMB 11950 / KT2440) protein is Glutamate--cysteine ligase.